The chain runs to 1325 residues: Protein PHYTOCHROME-DEPENDENT LATE-FLOWERING (1325 aa).

2 stretches are compositionally biased toward polar residues: residues 313–331 (IGSTRNTQDQGSNSVSVSG) and 504–515 (NFPQTSWNVNPG). 5 disordered regions span residues 313 to 371 (IGST…MPGL), 462 to 558 (EPFE…EFSG), 593 to 616 (ANEAMQQRQHQAQMAAKRRTNSLP), 852 to 875 (VAGQASGEASKHGNTGNTPNNSTQ), and 1160 to 1325 (QQQQ…GNNS). Over residues 518 to 529 (IEKEPKKEEQFS) the composition is skewed to basic and acidic residues. The segment covering 596-607 (AMQQRQHQAQMA) has biased composition (low complexity). Residues 863 to 875 (HGNTGNTPNNSTQ) show a composition bias toward polar residues. A compositionally biased stretch (low complexity) spans 1160 to 1224 (QQQQQQQLQQ…QQQATASPLQ (65 aa)). Residues 1225 to 1239 (SVLSPPQVGSPSAGI) show a composition bias toward polar residues. Low complexity predominate over residues 1240 to 1262 (TQQQLQQSSPQQMSQRTPMSPQQ). Composition is skewed to polar residues over residues 1263–1286 (VNQRTPMSPQISSGAMHPMSTSNL) and 1293–1325 (PQLSSQTMGSVGSITNSPMELQGPKNNSAGNNS).

As to quaternary structure, component of a red light-dependent nuclear complex made of PHL, PHYB and CO. Interacts directly with PHYB and CO; CO binding requires the presence of PHYB. Mostly expressed in cotyledons and leaves, both in mesophyll and vasculature cells. Also present in roots, hypocotyls and shoot apices.

It localises to the nucleus. The protein localises to the nuclear body. Its subcellular location is the cytoplasmic granule. It is found in the cytoplasm. Functionally, triggers photoperiod-monitored flowering by repressing PHYB-dependent flowering negative regulation, probably through physical interactions with PHYB and CO. This Arabidopsis thaliana (Mouse-ear cress) protein is Protein PHYTOCHROME-DEPENDENT LATE-FLOWERING.